The sequence spans 213 residues: Glycerol-3-phosphate acyltransferase (213 aa).

Transmembrane regions (helical) follow at residues 4–24 (IILL…LWIG), 48–68 (ILGV…GTLA), 71–91 (LPLF…LAVI), 113–133 (VILG…IIVL), 144–164 (VIGA…GFIL), and 165–185 (TSYD…IILR).

It belongs to the PlsY family. Probably interacts with PlsX.

The protein localises to the cell membrane. The enzyme catalyses an acyl phosphate + sn-glycerol 3-phosphate = a 1-acyl-sn-glycero-3-phosphate + phosphate. It participates in lipid metabolism; phospholipid metabolism. In terms of biological role, catalyzes the transfer of an acyl group from acyl-phosphate (acyl-PO(4)) to glycerol-3-phosphate (G3P) to form lysophosphatidic acid (LPA). This enzyme utilizes acyl-phosphate as fatty acyl donor, but not acyl-CoA or acyl-ACP. The polypeptide is Glycerol-3-phosphate acyltransferase (Lactococcus lactis subsp. lactis (strain IL1403) (Streptococcus lactis)).